Reading from the N-terminus, the 326-residue chain is Phospho-N-acetylmuramoyl-pentapeptide-transferase (326 aa).

A run of 9 helical transmembrane segments spans residues 3 to 23 (ISIS…PAFI), 51 to 71 (TMGG…FALF), 79 to 99 (VGMI…DDFL), 115 to 135 (LALQ…GGDI), 138 to 158 (VFGY…FWLV), 169 to 189 (GVDG…GVIA), 195 to 215 (MDIL…FIFN), 221 to 243 (VFMG…MALH), and 306 to 326 (FFFW…LYLM).

The protein belongs to the glycosyltransferase 4 family. MraY subfamily. Requires Mg(2+) as cofactor.

The protein resides in the cell membrane. The enzyme catalyses UDP-N-acetyl-alpha-D-muramoyl-L-alanyl-gamma-D-glutamyl-L-lysyl-D-alanyl-D-alanine + di-trans,octa-cis-undecaprenyl phosphate = Mur2Ac(oyl-L-Ala-gamma-D-Glu-L-Lys-D-Ala-D-Ala)-di-trans,octa-cis-undecaprenyl diphosphate + UMP. It functions in the pathway cell wall biogenesis; peptidoglycan biosynthesis. In terms of biological role, catalyzes the initial step of the lipid cycle reactions in the biosynthesis of the cell wall peptidoglycan: transfers peptidoglycan precursor phospho-MurNAc-pentapeptide from UDP-MurNAc-pentapeptide onto the lipid carrier undecaprenyl phosphate, yielding undecaprenyl-pyrophosphoryl-MurNAc-pentapeptide, known as lipid I. The sequence is that of Phospho-N-acetylmuramoyl-pentapeptide-transferase from Streptococcus pneumoniae (strain 70585).